The chain runs to 887 residues: PAN2-PAN3 deadenylation complex subunit Pan3 (887 aa).

The segment at 49 to 77 adopts a C3H1-type zinc-finger fold; that stretch reads GVKLKYCRYYAKDKTCFYGEECQFLHEDP. Disordered regions lie at residues 111-139, 280-307, and 321-393; these read GGGA…GLDG, ENNL…SNVS, and PSMG…GQVI. Residues 147–498 form a necessary and sufficient for interaction with PABPC1 but not needed for interaction with PAN2 region; sequence MDGGALTDAS…PPPNRIQKSS (352 aa). Polar residues-rich tracts occupy residues 281 to 290 and 298 to 307; these read NNLQTPNPTA and GSTSRLSNVS. The short motif at 284-299 is the PABPC-interacting motif-2 (PAM-2) element; that stretch reads QTPNPTASEFIPKGGS. A phosphoserine mark is found at Ser-354 and Ser-361. The pseudokinase domain stretch occupies residues 463 to 750; sequence QIDQADMPAV…SVNDIMPMIG (288 aa). ATP contacts are provided by residues Arg-521, 570–577, and 644–645; these read DFHAGGET and TK. The segment at 789 to 887 is knob domain; it reads TINERPEFQK…ELIAAANGQL (99 aa).

This sequence belongs to the protein kinase superfamily. PAN3 family. In terms of assembly, homodimer. Forms a heterotrimer with a catalytic subunit PAN2 to form the poly(A)-nuclease (PAN) deadenylation complex. Interacts (via PAM-2 motif) with poly(A)-binding protein PABPC1 (via PABC domain), conferring substrate specificity of the enzyme complex. Interacts with the GW182 family proteins TNRC6A, TNRC6B and TNRC6C. Interacts with YTHDF3. Interacts with PAN2. Interacts (via N-terminus) with PABPC1 at lower efficiency than isoform 3. As to quaternary structure, interacts with PAN2. Interacts (via N-terminus) with PABPC1 at higher efficiency than isoform 1.

The protein resides in the cytoplasm. It is found in the P-body. The protein localises to the nucleus. In terms of biological role, regulatory subunit of the poly(A)-nuclease (PAN) deadenylation complex, one of two cytoplasmic mRNA deadenylases involved in general and miRNA-mediated mRNA turnover. PAN specifically shortens poly(A) tails of RNA and the activity is stimulated by poly(A)-binding protein (PABP). PAN deadenylation is followed by rapid degradation of the shortened mRNA tails by the CCR4-NOT complex. Deadenylated mRNAs are then degraded by two alternative mechanisms, namely exosome-mediated 3'-5' exonucleolytic degradation, or deadenylation-dependent mRNA decapping and subsequent 5'-3' exonucleolytic degradation by XRN1. PAN3 acts as a regulator for PAN activity, recruiting the catalytic subunit PAN2 to mRNA via its interaction with RNA and PABP, and to miRNA targets via its interaction with GW182 family proteins. Its function is as follows. Decreases PAN2-mediated deadenylation, possibly by preventing progression into the second CCR4-NOT mediated stage of biphasic deadenylation. Has a significant effect on mRNA stability, generally stabilizing a subset of the transcriptome. Stabilizes mRNAs degraded by the AU-rich element (ARE)-mediated mRNA decay pathway but promotes degradation of mRNAs by the microRNA-mediated pathway. Its activity influences mRNP remodeling, specifically reducing formation of a subset of P-bodies containing GW220, an isoform of TNRC6A. Functionally, enhances PAN2 deadenylase activity and has an extensive effect on mRNA stability, generally enhancing mRNA decay across the transcriptome by multiple pathways, including the AU-rich element (ARE)-mediated pathway, microRNA-mediated pathway and the nonsense-mediated pathway (NMD). Its activity is required for efficient P-body formation. May be involved in regulating mRNAs of genes involved in cell cycle progression and cell proliferation. In Mus musculus (Mouse), this protein is PAN2-PAN3 deadenylation complex subunit Pan3.